A 133-amino-acid chain; its full sequence is Nucleoside diphosphate kinase (133 aa).

ATP-binding residues include Lys9, Phe57, Arg85, Thr91, Arg102, and Asn112. The active-site Pros-phosphohistidine intermediate is His115.

Belongs to the NDK family. It depends on Mg(2+) as a cofactor.

The protein localises to the cytoplasm. It catalyses the reaction a 2'-deoxyribonucleoside 5'-diphosphate + ATP = a 2'-deoxyribonucleoside 5'-triphosphate + ADP. The catalysed reaction is a ribonucleoside 5'-diphosphate + ATP = a ribonucleoside 5'-triphosphate + ADP. Major role in the synthesis of nucleoside triphosphates other than ATP. The ATP gamma phosphate is transferred to the NDP beta phosphate via a ping-pong mechanism, using a phosphorylated active-site intermediate. This Methanococcus maripaludis (strain DSM 14266 / JCM 13030 / NBRC 101832 / S2 / LL) protein is Nucleoside diphosphate kinase.